Here is a 57-residue protein sequence, read N- to C-terminus: MSGGFYNVECPDCENEQTVFGKASTEVACAVCGTTLARPTGGEADLLGEVIETVEAR.

Positions 10, 13, 29, and 32 each coordinate Zn(2+). The C4-type zinc-finger motif lies at 10 to 32; the sequence is CPDCENEQTVFGKASTEVACAVC.

Belongs to the eukaryotic ribosomal protein eS27 family. Part of the 30S ribosomal subunit. The cofactor is Zn(2+).

In Halobacterium salinarum (strain ATCC 29341 / DSM 671 / R1), this protein is Small ribosomal subunit protein eS27.